Consider the following 331-residue polypeptide: Carbonic anhydrase-related protein 11 (331 aa).

Residues 1 to 23 form the signal peptide; that stretch reads MGGAARLSAPRALVLWAVLGAAA. Positions 33 to 306 constitute an Alpha-carbonic anhydrase domain; sequence DWWSYKDNLQ…LAHRALRGNR (274 aa). 4 N-linked (GlcNAc...) asparagine glycosylation sites follow: N118, N170, N189, and N263. The disordered stretch occupies residues 303-331; the sequence is RGNRDPRHPERRCRGPNYRLHVDGAPHGR. Positions 322–331 are enriched in basic and acidic residues; the sequence is LHVDGAPHGR.

The protein belongs to the alpha-carbonic anhydrase family.

Its subcellular location is the secreted. Functionally, does not have a catalytic activity. The chain is Carbonic anhydrase-related protein 11 (CA11) from Sus scrofa (Pig).